We begin with the raw amino-acid sequence, 239 residues long: Ribonuclease 3 (239 aa).

The RNase III domain maps to 18 to 141 (YTTLEKALGY…LMAGVYLEAG (124 aa)). Glu-54 is a Mg(2+) binding site. Asp-58 is an active-site residue. Residues Ser-127 and Glu-130 each contribute to the Mg(2+) site. The active site involves Glu-130. The DRBM domain maps to 168–237 (DYKTALQELT…AYQALQKLKE (70 aa)).

Belongs to the ribonuclease III family. Homodimer. The cofactor is Mg(2+).

Its subcellular location is the cytoplasm. The enzyme catalyses Endonucleolytic cleavage to 5'-phosphomonoester.. Its function is as follows. Digests double-stranded RNA. Involved in the processing of primary rRNA transcript to yield the immediate precursors to the large and small rRNAs (23S and 16S). Processes some mRNAs, and tRNAs when they are encoded in the rRNA operon. Processes pre-crRNA and tracrRNA of type II CRISPR loci if present in the organism. The polypeptide is Ribonuclease 3 (Helicobacter pylori (strain ATCC 700392 / 26695) (Campylobacter pylori)).